Here is a 117-residue protein sequence, read N- to C-terminus: UPF0122 protein Teth39_1278 (117 aa).

This sequence belongs to the UPF0122 family.

Might take part in the signal recognition particle (SRP) pathway. This is inferred from the conservation of its genetic proximity to ftsY/ffh. May be a regulatory protein. The polypeptide is UPF0122 protein Teth39_1278 (Thermoanaerobacter pseudethanolicus (strain ATCC 33223 / 39E) (Clostridium thermohydrosulfuricum)).